The chain runs to 1378 residues: MGLPLPLLQSSLLLMLLLRLSAASTNLNWQCPRIPYAASRDFSVKYVVPSFSAGGRVQATAAYEDSTNSAVFVATRNHLHVLGPDLQFIENLTTGPIGNPGCQTCASCGPGPHGPPKDTDTLVLVMEPGLPALVSCGSTLQGRCFLHELEPRGKALHLAAPACLFSANNNKPEACTDCVASPLGTRVTVVEQGHASYFYVASSLDPELAASFSPRSVSIRRLKSDTSGFQPGFPSLSVLPKYLASYLIKYVYSFHSGDFVYFLTVQPISVTSPPSALHTRLVRLNAVEPEIGDYRELVLDCHFAPKRRRRGAPEGTQPYPVLQAAHSAPVDAKLAVELSISEGQEVLFGVFVTVKDGGSGMGPNSVVCAFPIYHLNILIEEGVEYCCHSSNSSSLLSRGLDFFQTPSFCPNPPGGEASGPSSRCHYFPLMVHASFTRVDLFNGLLGSVKVTALHVTRLGNVTVAHMGTVDGRVLQVEIARSLNYLLYVSNFSLGSSGQPVHRDVSRLGNDLLFASGDQVFKVPIQGPGCRHFLTCWRCLRAQRFMGCGWCGDRCDRQKECPGSWQQDHCPPEISEFYPHSGPLRGTTRLTLCGSNFYLRPDDVVPEGTHQITVGQSPCRLLPKDSSSPRPGSLKEFIQELECELEPLVTQAVGTTNISLVITNMPAGKHFRVEGISVQEGFSFVEPVLTSIKPDFGPRAGGTYLTLEGQSLSVGTSRAVLVNGTQCRLEQVNEEQILCVTPPGAGTARVPLHLQIGGAEVPGSWTFHYKEDPIVLDISPKCGYSGSHIMIHGQHLTSAWHFTLSFHDGQSTVESRCAGQFVEQQQRRCRLPEYVVRNPQGWATGNLSVWGDGAAGFTLPGFRFLPPPSPLRAGLVELKPEEHSVKVEYVGLGAVADCVTVNMTVGGEVCQHELRGDVVICPLPPSLQLGKDGVPLQVCVDGGCHILSQVVRSSPGRASQRILLIALLVLILLVAVLAVALIFNSRRRKKQLGAHSLSPTTLSDINDTASGAPNHEESSESRDGTSVPLLRTESIRLQDLDRMLLAEVKDVLIPHEQVVIHTDQVIGKGHFGVVYHGEYTDGAQNQTHCAIKSLSRITEVQEVEAFLREGLLMRGLHHPNILALIGIMLPPEGLPRVLLPYMRHGDLLHFIRSPQRNPTVKDLVSFGLQVACGMEYLAEQKFVHRDLAARNCMLDESFTVKVADFGLARGVLDKEYYSVRQHRHARLPVKWMALESLQTYRFTTKSDVWSFGVLLWELLTRGAPPYPHIDPFDLSHFLAQGRRLPQPEYCPDSLYHVMLRCWEADPAARPTFRALVLEVKQVVASLLGDHYVQLTAAYVNVGPRAVDDGSVPPEQVQPSPQHCRSTSKPRPLSEPPLPT.

A signal peptide spans 1-23 (MGLPLPLLQSSLLLMLLLRLSAA). The Extracellular portion of the chain corresponds to 25–960 (TNLNWQCPRI…RSSPGRASQR (936 aa)). Positions 33–524 (RIPYAASRDF…SGDQVFKVPI (492 aa)) constitute a Sema domain. Asn-91 carries an N-linked (GlcNAc...) asparagine glycan. 7 disulfides stabilise this stretch: Cys-102/Cys-105, Cys-108/Cys-163, Cys-136/Cys-144, Cys-175/Cys-178, Cys-301/Cys-368, Cys-386/Cys-409, and Cys-387/Cys-424. Residues Asn-391, Asn-460, and Asn-490 are each glycosylated (N-linked (GlcNAc...) asparagine). 4 cysteine pairs are disulfide-bonded: Cys-529–Cys-547, Cys-535–Cys-569, Cys-538–Cys-554, and Cys-550–Cys-560. IPT/TIG domains follow at residues 571–673 (PEIS…FRVE), 686–769 (PVLT…FHYK), and 772–864 (PIVL…FRFL). Asn-656, Asn-722, Asn-845, and Asn-901 each carry an N-linked (GlcNAc...) asparagine glycan. The chain crosses the membrane as a helical span at residues 961–981 (ILLIALLVLILLVAVLAVALI). The Cytoplasmic segment spans residues 982–1378 (FNSRRRKKQL…RPLSEPPLPT (397 aa)). Residues 1002 to 1026 (SDINDTASGAPNHEESSESRDGTSV) are disordered. Basic and acidic residues predominate over residues 1013–1022 (NHEESSESRD). Residues 1059-1322 (IHTDQVIGKG…ALVLEVKQVV (264 aa)) form the Protein kinase domain. Residues 1065-1073 (IGKGHFGVV), Lys-1091, and 1138-1141 (LPYM) contribute to the ATP site. Catalysis depends on Asp-1185, which acts as the Proton acceptor. Arg-1189 serves as a coordination point for ATP. Phosphotyrosine; by autocatalysis occurs at positions 1215, 1216, 1330, and 1337. The interval 1347-1378 (DGSVPPEQVQPSPQHCRSTSKPRPLSEPPLPT) is disordered. Residues 1349 to 1360 (SVPPEQVQPSPQ) show a composition bias toward low complexity.

The protein belongs to the protein kinase superfamily. Tyr protein kinase family. Heterodimer of an alpha chain and a beta chain which are disulfide linked. Binds PLXNB1. Associates with and is negatively regulated by HYAL2. Interacts when phosphorylated with downstream effectors including PIK3R1, PCLG1, GRB2 and GAB1. Interacts with integrin beta1/ITGB1 in a ligand-independent fashion. Isoform sf-Stk forms covalent heterodimers with friend spleen focus-forming virus (FSFFV) gp55. Proteolytic processing yields the two subunits. In terms of processing, autophosphorylated in response to ligand binding on Tyr-1215 and Tyr-1216 in the kinase domain leading to further phosphorylation of Tyr-1330 and Tyr-1337 in the C-terminal multifunctional docking site. Post-translationally, ubiquitinated. Ubiquitination by CBL regulates the receptor stability and activity through proteasomal degradation. O-mannosylation of IPT/TIG domains on Thr or Ser residues by TMEM260 is required for protein maturation. O-mannosylated residues are composed of single mannose glycans that are not elongated or modified. In terms of tissue distribution, expressed in liver, skin, lung, brain, testis and kidney.

The protein resides in the membrane. The catalysed reaction is L-tyrosyl-[protein] + ATP = O-phospho-L-tyrosyl-[protein] + ADP + H(+). With respect to regulation, in its inactive state, the C-terminal tail interacts with the catalytic domain and inhibits the kinase activity. Upon ligand binding, the C-terminal tail is displaced and becomes phosphorylated, thus increasing the kinase activity. In terms of biological role, receptor tyrosine kinase that transduces signals from the extracellular matrix into the cytoplasm by binding to MST1 ligand. Regulates many physiological processes including cell survival, migration and differentiation. Ligand binding at the cell surface induces autophosphorylation of RON on its intracellular domain that provides docking sites for downstream signaling molecules. Following activation by ligand, interacts with the PI3-kinase subunit PIK3R1, PLCG1 or the adapter GAB1. Recruitment of these downstream effectors by RON leads to the activation of several signaling cascades including the RAS-ERK, PI3 kinase-AKT, or PLCgamma-PKC. RON signaling activates the wound healing response by promoting epithelial cell migration, proliferation as well as survival at the wound site. Also plays a role in the innate immune response by regulating the migration and phagocytic activity of macrophages. Alternatively, RON can also promote signals such as cell migration and proliferation in response to growth factors other than MST1 ligand. The protein is Macrophage-stimulating protein receptor (Mst1r) of Mus musculus (Mouse).